The sequence spans 282 residues: Bifunctional protein FolD (282 aa).

NADP(+) is bound by residues 166 to 168 (GAS) and I232.

This sequence belongs to the tetrahydrofolate dehydrogenase/cyclohydrolase family. Homodimer.

The enzyme catalyses (6R)-5,10-methylene-5,6,7,8-tetrahydrofolate + NADP(+) = (6R)-5,10-methenyltetrahydrofolate + NADPH. It catalyses the reaction (6R)-5,10-methenyltetrahydrofolate + H2O = (6R)-10-formyltetrahydrofolate + H(+). The protein operates within one-carbon metabolism; tetrahydrofolate interconversion. Its function is as follows. Catalyzes the oxidation of 5,10-methylenetetrahydrofolate to 5,10-methenyltetrahydrofolate and then the hydrolysis of 5,10-methenyltetrahydrofolate to 10-formyltetrahydrofolate. The chain is Bifunctional protein FolD from Haemophilus influenzae (strain PittEE).